Here is a 560-residue protein sequence, read N- to C-terminus: Phosphoglucomutase 1 (560 aa).

Alpha-D-glucose 1,6-bisphosphate-binding residues include R24 and S116. S116 acts as the Phosphoserine intermediate in catalysis. 4 residues coordinate Mg(2+): S116, D288, D290, and D292. Phosphoserine is present on S116. 6 residues coordinate alpha-D-glucose 1,6-bisphosphate: D292, R293, T357, E376, S378, and K389.

Belongs to the phosphohexose mutase family. As to quaternary structure, monomer. The cofactor is Mg(2+). Localized primarily to fat bodies in third instar larvae.

The enzyme catalyses alpha-D-glucose 1-phosphate = alpha-D-glucose 6-phosphate. It carries out the reaction O-phospho-L-seryl-[protein] + alpha-D-glucose 1-phosphate = alpha-D-glucose 1,6-bisphosphate + L-seryl-[protein]. The catalysed reaction is alpha-D-glucose 1,6-bisphosphate + L-seryl-[protein] = O-phospho-L-seryl-[protein] + alpha-D-glucose 6-phosphate. Its function is as follows. Catalyzes the reversible isomerization of alpha-D-glucose 1-phosphate to alpha-D-glucose 6-phosphate. The mechanism proceeds via the intermediate compound alpha-D-glucose 1,6-bisphosphate. This enzyme participates in both the breakdown and synthesis of glucose. Enzyme of the glycolytic pathway. Glycolysis is essential in glial cells but not in neurons; neurons rely on the citric acid cycle for their energy needs, and on lactate and alanine secreted into the hemolymph by glial cells to fuel it. This chain is Phosphoglucomutase 1, found in Drosophila melanogaster (Fruit fly).